The following is a 154-amino-acid chain: MGRLISVRFSLLVVFLSLSGIGAGLCCPLGWSSFDQHCYKVFEPVKNWTEAEEICMQQHKGSRLASIHGSEEEAFVSKLASKALKFTSMWIGLNNPWKDCKWEWSDNARFDYKAWKRRPYCTVMVVKPDRIFWFTRGCEKSVSFVCKFLTDPAV.

Positions 1–26 (MGRLISVRFSLLVVFLSLSGIGAGLC) are cleaved as a signal peptide. A disulfide bridge connects residues Cys-27 and Cys-38. One can recognise a C-type lectin domain in the interval 34 to 147 (FDQHCYKVFE…CEKSVSFVCK (114 aa)). Asn-47 carries an N-linked (GlcNAc...) asparagine glycan. Cystine bridges form between Cys-55–Cys-146 and Cys-121–Cys-138.

The protein belongs to the snaclec family. Heterodimer of subunits A and B; disulfide-linked. As to expression, expressed by the venom gland.

The protein localises to the secreted. Functionally, EMS16 is a potent and selective inhibitor of alpha-2/beta-1 (ITGA2/ITGB1) integrin and acts as a potent antagonist of platelet aggregation and cell migration. Binds specifically to the I domain of the alpha-2 subunit, in a metal ion-independent fashion. The protein is Snaclec EMS16 subunit beta of Echis multisquamatus (Central Asian sand viper).